A 422-amino-acid chain; its full sequence is L-2-hydroxyglutarate dehydrogenase (422 aa).

Belongs to the L2HGDH family. FAD serves as cofactor.

The protein localises to the cell inner membrane. The catalysed reaction is (S)-2-hydroxyglutarate + a quinone = a quinol + 2-oxoglutarate. Its pathway is amino-acid degradation. Catalyzes the dehydrogenation of L-2-hydroxyglutarate (L2HG) to alpha-ketoglutarate and couples to the respiratory chain by feeding electrons from the reaction into the membrane quinone pool. Functions in a L-lysine degradation pathway that proceeds via cadaverine, glutarate and L-2-hydroxyglutarate. Also displays some oxidase activity in vitro on L-2-hydroxyglutarate with O2 as the electron acceptor, but this activity is most likely not physiological. This Salmonella houtenae protein is L-2-hydroxyglutarate dehydrogenase.